Reading from the N-terminus, the 527-residue chain is N-acetylglutamate synthase, mitochondrial (527 aa).

The transit peptide at 1–18 (MATAWVATALRSAAAARR) directs the protein to the mitochondrion. A disordered region spans residues 14-91 (AAARRLRSPG…PLESPAPPAG (78 aa)). The amino-acid kinase domain (AAK) stretch occupies residues 19–369 (LRSPGGPGGS…CGTLFKNAER (351 aa)). Basic and acidic residues predominate over residues 54–63 (AHAEDAEGAK). Residues 77–89 (TPLPTPLESPAPP) show a composition bias toward pro residues. The region spanning 368 to 519 (ERMLRVRNLD…HAKGLPDSFC (152 aa)) is the N-acetyltransferase domain. Residues lysine 394, lysine 437, and 467–472 (RSRVTN) contribute to the substrate site.

This sequence belongs to the acetyltransferase family. Homodimer. Homotetramer. In terms of processing, probably processed by mitochondrial processing peptidase (MPP). The long form has not yet been isolated. Highly expressed in the liver and small intestine. Weakly expressed in the kidney, spleen and testis.

The protein localises to the mitochondrion matrix. The catalysed reaction is L-glutamate + acetyl-CoA = N-acetyl-L-glutamate + CoA + H(+). The protein operates within amino-acid biosynthesis; L-arginine biosynthesis; N(2)-acetyl-L-ornithine from L-glutamate: step 1/4. Increased by L-arginine. In terms of biological role, plays a role in the regulation of ureagenesis by producing the essential cofactor N-acetylglutamate (NAG), thus modulating carbamoylphosphate synthase I (CPS1) activity. In Mus musculus (Mouse), this protein is N-acetylglutamate synthase, mitochondrial (Nags).